The primary structure comprises 61 residues: Insect toxin BsIT1 (61 aa).

The LCN-type CS-alpha/beta domain maps to 1–61; that stretch reads DGYILMRNGC…KHLNYHKKTC (61 aa). 4 disulfide bridges follow: C10–C61, C14–C35, C21–C42, and C25–C44.

It belongs to the long (4 C-C) scorpion toxin superfamily. Sodium channel inhibitor family. Beta subfamily. Expressed by the venom gland.

It localises to the secreted. Depressant insect beta-toxins cause a transient contraction paralysis followed by a slow flaccid paralysis. They bind voltage-independently at site-4 of sodium channels (Nav) and shift the voltage of activation toward more negative potentials thereby affecting sodium channel activation and promoting spontaneous and repetitive firing. This toxin is active only on insects and causes a transient contraction paralysis followed by a slow flaccid paralysis. In Hottentotta tamulus sindicus (Scorpion), this protein is Insect toxin BsIT1.